We begin with the raw amino-acid sequence, 262 residues long: uncharacterized protein (262 aa).

The N-terminal stretch at 1–22 (MGYLKRFALYISVMILIFAIAG) is a signal peptide. Residue C23 is the site of N-palmitoyl cysteine attachment. C23 carries the S-diacylglycerol cysteine lipid modification.

The protein belongs to the staphylococcal tandem lipoprotein family.

It localises to the cell membrane. This is an uncharacterized protein from Staphylococcus aureus (strain NCTC 8325 / PS 47).